Reading from the N-terminus, the 113-residue chain is Hydrogenase maturation factor HypA (113 aa).

His-2 contributes to the Ni(2+) binding site. 4 residues coordinate Zn(2+): Cys-73, Cys-76, Cys-89, and Cys-92.

It belongs to the HypA/HybF family.

Functionally, involved in the maturation of [NiFe] hydrogenases. Required for nickel insertion into the metal center of the hydrogenase. The protein is Hydrogenase maturation factor HypA of Chlorobaculum parvum (strain DSM 263 / NCIMB 8327) (Chlorobium vibrioforme subsp. thiosulfatophilum).